The following is a 179-amino-acid chain: Large ribosomal subunit protein uL6 (179 aa).

It belongs to the universal ribosomal protein uL6 family. In terms of assembly, part of the 50S ribosomal subunit.

This protein binds to the 23S rRNA, and is important in its secondary structure. It is located near the subunit interface in the base of the L7/L12 stalk, and near the tRNA binding site of the peptidyltransferase center. This is Large ribosomal subunit protein uL6 from Mycolicibacterium vanbaalenii (strain DSM 7251 / JCM 13017 / BCRC 16820 / KCTC 9966 / NRRL B-24157 / PYR-1) (Mycobacterium vanbaalenii).